The primary structure comprises 362 residues: Histidinol-phosphate aminotransferase 2 (362 aa).

K222 bears the N6-(pyridoxal phosphate)lysine mark.

This sequence belongs to the class-II pyridoxal-phosphate-dependent aminotransferase family. Histidinol-phosphate aminotransferase subfamily. As to quaternary structure, homodimer. Requires pyridoxal 5'-phosphate as cofactor.

It carries out the reaction L-histidinol phosphate + 2-oxoglutarate = 3-(imidazol-4-yl)-2-oxopropyl phosphate + L-glutamate. It functions in the pathway amino-acid biosynthesis; L-histidine biosynthesis; L-histidine from 5-phospho-alpha-D-ribose 1-diphosphate: step 7/9. This is Histidinol-phosphate aminotransferase 2 from Carboxydothermus hydrogenoformans (strain ATCC BAA-161 / DSM 6008 / Z-2901).